Reading from the N-terminus, the 278-residue chain is tRNA pseudouridine synthase A (278 aa).

Catalysis depends on D61, which acts as the Nucleophile. Substrate is bound at residue Y119.

It belongs to the tRNA pseudouridine synthase TruA family. In terms of assembly, homodimer.

The catalysed reaction is uridine(38/39/40) in tRNA = pseudouridine(38/39/40) in tRNA. Formation of pseudouridine at positions 38, 39 and 40 in the anticodon stem and loop of transfer RNAs. The polypeptide is tRNA pseudouridine synthase A (Oleidesulfovibrio alaskensis (strain ATCC BAA-1058 / DSM 17464 / G20) (Desulfovibrio alaskensis)).